The following is a 174-amino-acid chain: Secretory-abundant heat soluble protein 68234 (174 aa).

An N-terminal signal peptide occupies residues 1–19 (MARFLVALALFGVVAMTAA). Positions 26–57 (EWSGKPWLGKFVAEVTDKSENWEAFVDALGLP) are SAHS-c1. Positions 72-100 (YKQGDHYHHIFALPDKNFEKDIEFTLGQE) are SAHS-c2. An SAHS-c3 region spans residues 113 to 162 (KYSEDGEKLVADVSIPTKGKTIRSEYEVQGDQLIKTYKTGDIVAKKWFKK).

It belongs to the Secretory-abundant heat soluble protein (SAHS) family.

The protein localises to the secreted. Secreted heat soluble protein acting as a molecular shield in water-deficient condition. Tardigrade-specific intrinsically disordered proteins (TDPs) are essential for desiccation tolerance by forming non-crystalline amorphous solids upon desiccation, and this vitrified state mirrors their protective capabilities. The sequence is that of Secretory-abundant heat soluble protein 68234 from Hypsibius exemplaris (Freshwater tardigrade).